The sequence spans 671 residues: DNA ligase (671 aa).

NAD(+) contacts are provided by residues 34 to 38 (DAEYD), 83 to 84 (SL), and E115. Catalysis depends on K117, which acts as the N6-AMP-lysine intermediate. R138, E174, K291, and K315 together coordinate NAD(+). Residues C409, C412, C427, and C432 each coordinate Zn(2+). Residues 589-671 (RSGGPLTGKS…LQMIDTLEEA (83 aa)) form the BRCT domain.

Belongs to the NAD-dependent DNA ligase family. LigA subfamily. Mg(2+) serves as cofactor. The cofactor is Mn(2+).

The catalysed reaction is NAD(+) + (deoxyribonucleotide)n-3'-hydroxyl + 5'-phospho-(deoxyribonucleotide)m = (deoxyribonucleotide)n+m + AMP + beta-nicotinamide D-nucleotide.. Functionally, DNA ligase that catalyzes the formation of phosphodiester linkages between 5'-phosphoryl and 3'-hydroxyl groups in double-stranded DNA using NAD as a coenzyme and as the energy source for the reaction. It is essential for DNA replication and repair of damaged DNA. This chain is DNA ligase, found in Syntrophotalea carbinolica (strain DSM 2380 / NBRC 103641 / GraBd1) (Pelobacter carbinolicus).